The sequence spans 344 residues: MSMSGLPFDDFRALLRELPGPDTHALVAAKERNAQLTKPAGSLGRLEEIAMWLAAWSGRSPAVTRPLVAIFAGNHGVTRHGVTPYPTSVTQQMVENFAAGGAAINQICVANDLGLKIFDLALDYPTGDITCEPALSERDCAATMAFGMEAIAGGTDLLCVGEMGIGNTTIAAAINLALYGGTAEEWTGPGTGSEGEVMARKIAAVKAAVEFHKDHLSDPLEIMRRLGGREIAAIAGAILAARVQRIPVLIDGYVATAAAALLKAANSSALDHCLIGHVSGEPGHLAAVEKLGKTPLLALGMRLGEGTGAALAAGIVKAAAACHSGMATFEAAGVDTRISPRTEH.

The active-site Proton acceptor is Glu-305.

The protein belongs to the CobT family.

The enzyme catalyses 5,6-dimethylbenzimidazole + nicotinate beta-D-ribonucleotide = alpha-ribazole 5'-phosphate + nicotinate + H(+). It functions in the pathway nucleoside biosynthesis; alpha-ribazole biosynthesis; alpha-ribazole from 5,6-dimethylbenzimidazole: step 1/2. Its function is as follows. Catalyzes the synthesis of alpha-ribazole-5'-phosphate from nicotinate mononucleotide (NAMN) and 5,6-dimethylbenzimidazole (DMB). In Agrobacterium fabrum (strain C58 / ATCC 33970) (Agrobacterium tumefaciens (strain C58)), this protein is Nicotinate-nucleotide--dimethylbenzimidazole phosphoribosyltransferase.